Here is a 329-residue protein sequence, read N- to C-terminus: Delta-aminolevulinic acid dehydratase (329 aa).

Residue Lys202 is the Schiff-base intermediate with substrate of the active site. The 5-aminolevulinate site is built by Arg212 and Arg223. Glu239 provides a ligand contact to Mg(2+). The active-site Schiff-base intermediate with substrate is Lys254. 2 residues coordinate 5-aminolevulinate: Ser280 and Tyr319.

It belongs to the ALAD family. Homooctamer.

It carries out the reaction 2 5-aminolevulinate = porphobilinogen + 2 H2O + H(+). The protein operates within porphyrin-containing compound metabolism; protoporphyrin-IX biosynthesis; coproporphyrinogen-III from 5-aminolevulinate: step 1/4. Functionally, catalyzes an early step in the biosynthesis of tetrapyrroles. Binds two molecules of 5-aminolevulinate per subunit, each at a distinct site, and catalyzes their condensation to form porphobilinogen. The protein is Delta-aminolevulinic acid dehydratase (hemB) of Mycobacterium tuberculosis (strain CDC 1551 / Oshkosh).